A 263-amino-acid chain; its full sequence is tRNA uridine(34) hydroxylase (263 aa).

In terms of domain architecture, Rhodanese spans 129–223; that stretch reads EGREIALLDT…YFEEVGGAHY (95 aa). C183 serves as the catalytic Cysteine persulfide intermediate.

The protein belongs to the TrhO family.

The catalysed reaction is uridine(34) in tRNA + AH2 + O2 = 5-hydroxyuridine(34) in tRNA + A + H2O. Functionally, catalyzes oxygen-dependent 5-hydroxyuridine (ho5U) modification at position 34 in tRNAs. The chain is tRNA uridine(34) hydroxylase from Variovorax paradoxus (strain S110).